Here is a 2173-residue protein sequence, read N- to C-terminus: Mediator of RNA polymerase II transcription subunit 12 (2173 aa).

Disordered regions lie at residues 1–34 (MAAFGVLSYEHRPLKRPRLGPPDVYPQDPKQKED), 318–345 (GGHQAHGISAQQGNALPPTPTSQPAGGN), 630–718 (ASNS…KGMD), 784–804 (KSTAETGGEEGQKRKRSKPEA), 1380–1404 (MNSSNPSWNGSAVSGSSVSNSNSAS), 1443–1467 (ELEKGQHLGPSSRKERDRQKQKSMS), 1737–1780 (EEEP…VKQE), and 2020–2068 (QGIH…FRPQ). Over residues 702 to 717 (QAQEQESKSTAKDKGM) the composition is skewed to basic and acidic residues. Positions 1389–1404 (GSAVSGSSVSNSNSAS) are enriched in low complexity. Composition is skewed to basic and acidic residues over residues 1443–1462 (ELEKGQHLGPSSRKERDRQK) and 1747–1759 (EPDKKLDTAKVEK). A compositionally biased stretch (low complexity) spans 2034-2057 (QQQQQQQQQQQQQQQQQQVHQQQQ).

The protein belongs to the Mediator complex subunit 12 family. As to quaternary structure, component of the Mediator complex.

It is found in the nucleus. Functionally, component of the Mediator complex, a coactivator involved in regulated gene transcription of nearly all RNA polymerase II-dependent genes. Mediator functions as a bridge to convey information from gene-specific regulatory proteins to the basal RNA polymerase II transcription machinery. Mediator is recruited to promoters by direct interactions with regulatory proteins and serves as a scaffold for the assembly of a functional preinitiation complex with RNA polymerase II and the general transcription factors. Required for development of the body axis, brain, ear, kidney, forelimb and neural crest and for pigmentation. Acts as a coactivator for sox9a and/or sox9b promoting the expression of several neuronal determination genes. This chain is Mediator of RNA polymerase II transcription subunit 12 (med12), found in Danio rerio (Zebrafish).